The primary structure comprises 432 residues: 3-isopropylmalate dehydratase large subunit (432 aa).

C299, C364, and C367 together coordinate [4Fe-4S] cluster.

It belongs to the aconitase/IPM isomerase family. LeuC type 2 subfamily. Heterodimer of LeuC and LeuD. [4Fe-4S] cluster is required as a cofactor.

It catalyses the reaction (2R,3S)-3-isopropylmalate = (2S)-2-isopropylmalate. The protein operates within amino-acid biosynthesis; L-leucine biosynthesis; L-leucine from 3-methyl-2-oxobutanoate: step 2/4. Functionally, catalyzes the isomerization between 2-isopropylmalate and 3-isopropylmalate, via the formation of 2-isopropylmaleate. In Aquifex aeolicus (strain VF5), this protein is 3-isopropylmalate dehydratase large subunit.